Reading from the N-terminus, the 318-residue chain is Methionyl-tRNA formyltransferase (318 aa).

(6S)-5,6,7,8-tetrahydrofolate is bound at residue 110-113; sequence SLLP.

The protein belongs to the Fmt family.

It catalyses the reaction L-methionyl-tRNA(fMet) + (6R)-10-formyltetrahydrofolate = N-formyl-L-methionyl-tRNA(fMet) + (6S)-5,6,7,8-tetrahydrofolate + H(+). Its function is as follows. Attaches a formyl group to the free amino group of methionyl-tRNA(fMet). The formyl group appears to play a dual role in the initiator identity of N-formylmethionyl-tRNA by promoting its recognition by IF2 and preventing the misappropriation of this tRNA by the elongation apparatus. In Geobacillus sp. (strain WCH70), this protein is Methionyl-tRNA formyltransferase.